A 162-amino-acid chain; its full sequence is NADH-quinone oxidoreductase subunit I (162 aa).

4Fe-4S ferredoxin-type domains follow at residues 53 to 83 (LRRYPNGEERCIACKLCEAVCPALAITIESE) and 93 to 122 (TRYDIDLIKCIFCGFCEEACPVDAIVETRV). Positions 63, 66, 69, 73, 102, 105, 108, and 112 each coordinate [4Fe-4S] cluster.

Belongs to the complex I 23 kDa subunit family. As to quaternary structure, NDH-1 is composed of 14 different subunits. Subunits NuoA, H, J, K, L, M, N constitute the membrane sector of the complex. [4Fe-4S] cluster is required as a cofactor.

It is found in the cell inner membrane. It catalyses the reaction a quinone + NADH + 5 H(+)(in) = a quinol + NAD(+) + 4 H(+)(out). In terms of biological role, NDH-1 shuttles electrons from NADH, via FMN and iron-sulfur (Fe-S) centers, to quinones in the respiratory chain. The immediate electron acceptor for the enzyme in this species is believed to be ubiquinone. Couples the redox reaction to proton translocation (for every two electrons transferred, four hydrogen ions are translocated across the cytoplasmic membrane), and thus conserves the redox energy in a proton gradient. In Nitrosomonas eutropha (strain DSM 101675 / C91 / Nm57), this protein is NADH-quinone oxidoreductase subunit I.